We begin with the raw amino-acid sequence, 34 residues long: Photosystem II reaction center protein M (34 aa).

The helical transmembrane segment at 5-25 (ILAFIATALFILVPTAFLLII) threads the bilayer.

This sequence belongs to the PsbM family. As to quaternary structure, PSII is composed of 1 copy each of membrane proteins PsbA, PsbB, PsbC, PsbD, PsbE, PsbF, PsbH, PsbI, PsbJ, PsbK, PsbL, PsbM, PsbT, PsbX, PsbY, PsbZ, Psb30/Ycf12, at least 3 peripheral proteins of the oxygen-evolving complex and a large number of cofactors. It forms dimeric complexes.

It is found in the plastid. Its subcellular location is the chloroplast thylakoid membrane. One of the components of the core complex of photosystem II (PSII). PSII is a light-driven water:plastoquinone oxidoreductase that uses light energy to abstract electrons from H(2)O, generating O(2) and a proton gradient subsequently used for ATP formation. It consists of a core antenna complex that captures photons, and an electron transfer chain that converts photonic excitation into a charge separation. This subunit is found at the monomer-monomer interface. This Calycanthus floridus var. glaucus (Eastern sweetshrub) protein is Photosystem II reaction center protein M.